The following is an 885-amino-acid chain: Alanine--tRNA ligase (885 aa).

Histidine 571, histidine 575, cysteine 674, and histidine 678 together coordinate Zn(2+).

It belongs to the class-II aminoacyl-tRNA synthetase family. Zn(2+) is required as a cofactor.

It is found in the cytoplasm. The catalysed reaction is tRNA(Ala) + L-alanine + ATP = L-alanyl-tRNA(Ala) + AMP + diphosphate. Its function is as follows. Catalyzes the attachment of alanine to tRNA(Ala) in a two-step reaction: alanine is first activated by ATP to form Ala-AMP and then transferred to the acceptor end of tRNA(Ala). Also edits incorrectly charged Ser-tRNA(Ala) and Gly-tRNA(Ala) via its editing domain. The polypeptide is Alanine--tRNA ligase (Clavibacter michiganensis subsp. michiganensis (strain NCPPB 382)).